Here is a 353-residue protein sequence, read N- to C-terminus: Protein RecA (353 aa).

Residue 75-82 coordinates ATP; sequence GPESSGKT.

The protein belongs to the RecA family.

The protein resides in the cytoplasm. Functionally, can catalyze the hydrolysis of ATP in the presence of single-stranded DNA, the ATP-dependent uptake of single-stranded DNA by duplex DNA, and the ATP-dependent hybridization of homologous single-stranded DNAs. It interacts with LexA causing its activation and leading to its autocatalytic cleavage. In Cupriavidus pinatubonensis (strain JMP 134 / LMG 1197) (Cupriavidus necator (strain JMP 134)), this protein is Protein RecA.